Consider the following 555-residue polypeptide: Poly(A) polymerase PAPa (555 aa).

Positions 1-20 are disordered; the sequence is MNNQAYGVTPPISVANSTPK. Residues 86–88, 99–101, Asp-153, Lys-214, Tyr-223, and 232–233 each bind ATP; these read FGS, DID, and GV. Mg(2+) is bound by residues Asp-99, Asp-101, and Asp-153. Residues 532 to 555 are disordered; that stretch reads KRKRAVSKNEGKKKPKSVGTVSAA.

The protein belongs to the poly(A) polymerase family. The cofactor is Mg(2+). Requires Mn(2+) as cofactor.

The protein resides in the nucleus. It catalyses the reaction RNA(n) + ATP = RNA(n)-3'-adenine ribonucleotide + diphosphate. Functionally, polymerase that creates the 3'-poly(A) tail of mRNA's. May acquire specificity through interaction with a cleavage and polyadenylation factor. The polypeptide is Poly(A) polymerase PAPa (PAPA) (Candida albicans (strain SC5314 / ATCC MYA-2876) (Yeast)).